Here is a 449-residue protein sequence, read N- to C-terminus: Plasmepsin IV (449 aa).

At 1–37 (MALTVKEEEFSNTLIKNASAFDRLKLGNLKNLKIQKK) the chain is on the cytoplasmic side. A propeptide spanning residues 1–121 (MALTVKEEEF…SGYAQKGYLG (121 aa)) is cleaved from the precursor. A helical; Signal-anchor for type II membrane protein transmembrane segment spans residues 38-58 (LQFLYLILFVLITGVFFFFLI). Residues 59–449 (GNFYSHRKLY…SVGFAVAKNL (391 aa)) are Lumenal-facing. The 308-residue stretch at 137-444 (FYGEGQIGTN…DYEKESVGFA (308 aa)) folds into the Peptidase A1 domain. Residue Asp-155 is part of the active site. Cys-168 and Cys-173 are oxidised to a cystine. Residue Asp-335 is part of the active site. An intrachain disulfide couples Cys-370 to Cys-406.

Belongs to the peptidase A1 family. As to quaternary structure, component of the hemozoin formation complex (HFC) composed of falcipains FP2A and/or FP2B, plasmepsins PMII, PMIII/HAP and PMIV, heme detoxifying protein HDP and falcilysin FLN. The HFC complex is involved in hemoglobin degradation and detoxification of heme in the food vacuole during the asexual blood stage. Proteolytically cleaved into the soluble active mature form by cysteine proteases in the digestive vacuole of trophozoites. Proteolysis requires an acidic environment. Autoprocessing or transprocessing by other plasmepsins such as PMII may serve as an alternate activation system.

The protein localises to the membrane. Its subcellular location is the vacuole lumen. The catalysed reaction is Hydrolysis of the bonds linking certain hydrophobic residues in hemoglobin or globin. Also cleaves small molecules substrates such as Ala-Leu-Glu-Arg-Thr-Phe-|-Phe(NO2)-Ser-Phe-Pro-Thr.. With respect to regulation, inhibited by KNI derived compounds KNI-10333 and to a lesser extent KNI-10743. In terms of biological role, during the asexual blood stage, catalyzes the cleavage of denatured host hemoglobin (Hb). Digestion of host Hb is an essential step which provides the parasite with amino acids for protein synthesis, and regulates osmolarity. The polypeptide is Plasmepsin IV (Plasmodium falciparum (isolate 3D7)).